The chain runs to 562 residues: Actin-related protein 8 (562 aa).

Position 248-251 (248-251 (DVGD)) interacts with ATP.

This sequence belongs to the actin family. ARP8 subfamily. As to quaternary structure, component of the chromatin remodeling Ino80 complex. Exists as monomers and dimers, but the dimer is most probably the biologically relevant form required for stable interactions with histones that exploits the twofold symmetry of the nucleosome core.

It localises to the nucleus. In terms of biological role, plays an important role in the functional organization of mitotic chromosomes. Exhibits low basal ATPase activity, and unable to polymerize. Its function is as follows. Proposed core component of the chromatin remodeling INO80 complex which is involved in transcriptional regulation, DNA replication and probably DNA repair. Strongly prefer nucleosomes and H3-H4 tetramers over H2A-H2B dimers, suggesting it may act as a nucleosome recognition module within the complex. This is Actin-related protein 8 from Aedes aegypti (Yellowfever mosquito).